The following is a 112-amino-acid chain: Cytochrome c6 (112 aa).

Residues 1 to 25 (MKTLLTILALTLVTLTTWLSTPAFA) form the signal peptide. Heme c contacts are provided by C39, C42, H43, and M83.

The protein belongs to the cytochrome c family. PetJ subfamily. As to quaternary structure, monomer. Binds 1 heme c group covalently per subunit.

It localises to the cellular thylakoid lumen. In terms of biological role, functions as an electron carrier between membrane-bound cytochrome b6-f and photosystem I in oxygenic photosynthesis. The polypeptide is Cytochrome c6 (Synechococcus sp. (strain ATCC 27167 / PCC 6312)).